The chain runs to 353 residues: Photosystem II D2 protein (353 aa).

N-acetylthreonine is present on Thr2. Thr2 carries the phosphothreonine modification. A helical transmembrane segment spans residues 41–61; it reads CAYFALGGWLTGTTFVTSWYT. A chlorophyll a-binding site is contributed by His118. The chain crosses the membrane as a helical span at residues 125 to 141; sequence GFMLRQFEIARSVQLRP. Residues Gln130 and Asn143 each coordinate pheophytin a. The chain crosses the membrane as a helical span at residues 153–166; it reads VFVSVFLIYPLGQS. His198 contributes to the chlorophyll a binding site. The helical transmembrane segment at 208–228 threads the bilayer; sequence AALLCAIHGATVENTIFEDGD. A plastoquinone is bound by residues His215 and Phe262. His215 serves as a coordination point for Fe cation. Residue His269 coordinates Fe cation. The chain crosses the membrane as a helical span at residues 279 to 295; it reads GLWMSAVGVVGLAVNLR.

It belongs to the reaction center PufL/M/PsbA/D family. As to quaternary structure, PSII is composed of 1 copy each of membrane proteins PsbA, PsbB, PsbC, PsbD, PsbE, PsbF, PsbH, PsbI, PsbJ, PsbK, PsbL, PsbM, PsbT, PsbX, PsbY, PsbZ, Psb30/Ycf12, at least 3 peripheral proteins of the oxygen-evolving complex and a large number of cofactors. It forms dimeric complexes. It depends on The D1/D2 heterodimer binds P680, chlorophylls that are the primary electron donor of PSII, and subsequent electron acceptors. It shares a non-heme iron and each subunit binds pheophytin, quinone, additional chlorophylls, carotenoids and lipids. There is also a Cl(-1) ion associated with D1 and D2, which is required for oxygen evolution. The PSII complex binds additional chlorophylls, carotenoids and specific lipids. as a cofactor.

The protein resides in the plastid. The protein localises to the chloroplast thylakoid membrane. The enzyme catalyses 2 a plastoquinone + 4 hnu + 2 H2O = 2 a plastoquinol + O2. Photosystem II (PSII) is a light-driven water:plastoquinone oxidoreductase that uses light energy to abstract electrons from H(2)O, generating O(2) and a proton gradient subsequently used for ATP formation. It consists of a core antenna complex that captures photons, and an electron transfer chain that converts photonic excitation into a charge separation. The D1/D2 (PsbA/PsbD) reaction center heterodimer binds P680, the primary electron donor of PSII as well as several subsequent electron acceptors. D2 is needed for assembly of a stable PSII complex. The chain is Photosystem II D2 protein from Chaetosphaeridium globosum (Charophycean green alga).